Reading from the N-terminus, the 193-residue chain is Peptidyl-tRNA hydrolase (193 aa).

Residue Tyr-17 participates in tRNA binding. Catalysis depends on His-22, which acts as the Proton acceptor. Residues Phe-68, Asn-70, and Asn-115 each coordinate tRNA.

It belongs to the PTH family. As to quaternary structure, monomer.

It is found in the cytoplasm. The catalysed reaction is an N-acyl-L-alpha-aminoacyl-tRNA + H2O = an N-acyl-L-amino acid + a tRNA + H(+). Its function is as follows. Hydrolyzes ribosome-free peptidyl-tRNAs (with 1 or more amino acids incorporated), which drop off the ribosome during protein synthesis, or as a result of ribosome stalling. In terms of biological role, catalyzes the release of premature peptidyl moieties from peptidyl-tRNA molecules trapped in stalled 50S ribosomal subunits, and thus maintains levels of free tRNAs and 50S ribosomes. This is Peptidyl-tRNA hydrolase from Alteromonas mediterranea (strain DSM 17117 / CIP 110805 / LMG 28347 / Deep ecotype).